The primary structure comprises 438 residues: Protein phosphatase 2C homolog 2 (438 aa).

The PPM-type phosphatase domain maps to isoleucine 23–phenylalanine 294. 4 residues coordinate Mn(2+): aspartate 67, glycine 68, aspartate 236, and aspartate 285. Residues valine 370–aspartate 438 are disordered. The span at aspartate 375–lysine 387 shows a compositional bias: acidic residues. Residues glycine 398–aspartate 438 show a composition bias toward basic and acidic residues.

This sequence belongs to the PP2C family. The cofactor is Mg(2+). Mn(2+) serves as cofactor.

Its subcellular location is the cytoplasm. The protein localises to the nucleus. It carries out the reaction O-phospho-L-seryl-[protein] + H2O = L-seryl-[protein] + phosphate. The catalysed reaction is O-phospho-L-threonyl-[protein] + H2O = L-threonyl-[protein] + phosphate. In terms of biological role, dephosphorylating regulator for many key proteins. Negatively regulates the endoplasmic reticulum unfolded protein response. This is Protein phosphatase 2C homolog 2 from Hypocrea jecorina (strain QM6a) (Trichoderma reesei).